A 112-amino-acid polypeptide reads, in one-letter code: UPF0145 protein LAF_1635 (112 aa).

It belongs to the UPF0145 family.

The sequence is that of UPF0145 protein LAF_1635 from Limosilactobacillus fermentum (strain NBRC 3956 / LMG 18251) (Lactobacillus fermentum).